A 213-amino-acid chain; its full sequence is LexA repressor 2 (213 aa).

A DNA-binding region (H-T-H motif) is located at residues 27–47; the sequence is QTEIARAFGFKGVRAAQYHLE. Active-site for autocatalytic cleavage activity residues include serine 133 and lysine 170.

The protein belongs to the peptidase S24 family. In terms of assembly, homodimer.

The catalysed reaction is Hydrolysis of Ala-|-Gly bond in repressor LexA.. Its function is as follows. Represses a number of genes involved in the response to DNA damage (SOS response), including recA and lexA. In the presence of single-stranded DNA, RecA interacts with LexA causing an autocatalytic cleavage which disrupts the DNA-binding part of LexA, leading to derepression of the SOS regulon and eventually DNA repair. In Xanthomonas campestris pv. campestris (strain ATCC 33913 / DSM 3586 / NCPPB 528 / LMG 568 / P 25), this protein is LexA repressor 2.